We begin with the raw amino-acid sequence, 418 residues long: AP-3 complex subunit mu-2 (418 aa).

The 242-residue stretch at 176-417 folds into the MHD domain; sequence NNEAYFDVIE…MTKAGKFQVR (242 aa).

This sequence belongs to the adaptor complexes medium subunit family. As to quaternary structure, AP-3 associates with the BLOC-1 complex. Adaptor protein complex 3 (AP-3) is a heterotetramer composed of two large adaptins (delta-type subunit AP3D1 and beta-type subunit AP3B1 or AP3B2), a medium adaptin (mu-type subunit AP3M1 or AP3M2) and a small adaptin (sigma-type subunit APS1 or AP3S2).

Its subcellular location is the golgi apparatus. It localises to the cytoplasmic vesicle membrane. In terms of biological role, part of the AP-3 complex, an adaptor-related complex which is not clathrin-associated. The complex is associated with the Golgi region as well as more peripheral structures. It facilitates the budding of vesicles from the Golgi membrane and may be directly involved in trafficking to lysosomes. In concert with the BLOC-1 complex, AP-3 is required to target cargos into vesicles assembled at cell bodies for delivery into neurites and nerve terminals. This chain is AP-3 complex subunit mu-2 (AP3M2), found in Homo sapiens (Human).